We begin with the raw amino-acid sequence, 393 residues long: Chorismate synthase (393 aa).

Residues Arg-40 and Arg-46 each coordinate NADP(+). FMN contacts are provided by residues 129–131 (RSS), 249–250 (QA), Gly-301, 316–320 (KPIPT), and Arg-342.

The protein belongs to the chorismate synthase family. As to quaternary structure, homotetramer. The cofactor is FMNH2.

The enzyme catalyses 5-O-(1-carboxyvinyl)-3-phosphoshikimate = chorismate + phosphate. The protein operates within metabolic intermediate biosynthesis; chorismate biosynthesis; chorismate from D-erythrose 4-phosphate and phosphoenolpyruvate: step 7/7. In terms of biological role, catalyzes the anti-1,4-elimination of the C-3 phosphate and the C-6 proR hydrogen from 5-enolpyruvylshikimate-3-phosphate (EPSP) to yield chorismate, which is the branch point compound that serves as the starting substrate for the three terminal pathways of aromatic amino acid biosynthesis. This reaction introduces a second double bond into the aromatic ring system. The sequence is that of Chorismate synthase from Geobacter metallireducens (strain ATCC 53774 / DSM 7210 / GS-15).